Here is a 212-residue protein sequence, read N- to C-terminus: Guanylate kinase (212 aa).

Residues 5–187 (GILCIISAPS…ALMHLQSIML (183 aa)) enclose the Guanylate kinase-like domain. 12–19 (APSGTGKS) is a binding site for ATP.

The protein belongs to the guanylate kinase family.

Its subcellular location is the cytoplasm. It catalyses the reaction GMP + ATP = GDP + ADP. In terms of biological role, essential for recycling GMP and indirectly, cGMP. The polypeptide is Guanylate kinase (Blochmanniella pennsylvanica (strain BPEN)).